Reading from the N-terminus, the 197-residue chain is Superoxide dismutase [Fe] (197 aa).

Histidine 26, histidine 75, aspartate 157, and histidine 161 together coordinate Fe cation.

Belongs to the iron/manganese superoxide dismutase family. As to quaternary structure, homotetramer. Fe cation serves as cofactor.

The catalysed reaction is 2 superoxide + 2 H(+) = H2O2 + O2. Functionally, destroys superoxide anion radicals which are normally produced within the cells and which are toxic to biological systems. The protein is Superoxide dismutase [Fe] of Cupriavidus metallidurans (strain ATCC 43123 / DSM 2839 / NBRC 102507 / CH34) (Ralstonia metallidurans).